Reading from the N-terminus, the 203-residue chain is A-type ATP synthase subunit E (203 aa).

The protein belongs to the V-ATPase E subunit family. As to quaternary structure, has multiple subunits with at least A(3), B(3), C, D, E, F, H, I and proteolipid K(x).

Its subcellular location is the cell membrane. Component of the A-type ATP synthase that produces ATP from ADP in the presence of a proton gradient across the membrane. In Methanococcus maripaludis (strain C7 / ATCC BAA-1331), this protein is A-type ATP synthase subunit E.